The primary structure comprises 141 residues: Nucleoside triphosphatase NudI (141 aa).

Positions 1–141 constitute a Nudix hydrolase domain; the sequence is MRQRTIVCPL…RKTLRLKGLL (141 aa). The Nudix box signature appears at 38–59; the sequence is GGVEPGERIEEALRREIREELG.

The protein belongs to the Nudix hydrolase family. NudI subfamily. In terms of assembly, monomer. It depends on Mg(2+) as a cofactor.

The enzyme catalyses a ribonucleoside 5'-triphosphate + H2O = a ribonucleoside 5'-phosphate + diphosphate + H(+). It catalyses the reaction a 2'-deoxyribonucleoside 5'-triphosphate + H2O = a 2'-deoxyribonucleoside 5'-phosphate + diphosphate + H(+). It carries out the reaction dUTP + H2O = dUMP + diphosphate + H(+). The catalysed reaction is dTTP + H2O = dTMP + diphosphate + H(+). The enzyme catalyses dCTP + H2O = dCMP + diphosphate + H(+). Catalyzes the hydrolysis of nucleoside triphosphates, with a preference for pyrimidine deoxynucleoside triphosphates (dUTP, dTTP and dCTP). The chain is Nucleoside triphosphatase NudI from Escherichia coli O17:K52:H18 (strain UMN026 / ExPEC).